The primary structure comprises 393 residues: Formate-dependent phosphoribosylglycinamide formyltransferase (393 aa).

N(1)-(5-phospho-beta-D-ribosyl)glycinamide is bound by residues 22 to 23 and glutamate 82; that span reads EL. Residues arginine 114, lysine 155, 160–165, 195–198, and glutamate 203 contribute to the ATP site; these read SSGKGQ and EGFV. Residues 119–308 enclose the ATP-grasp domain; sequence RLAAEELGLP…EFALHVRAIL (190 aa). 2 residues coordinate Mg(2+): glutamate 267 and glutamate 279. Residues aspartate 286, lysine 356, and 363–364 contribute to the N(1)-(5-phospho-beta-D-ribosyl)glycinamide site; that span reads RR.

Belongs to the PurK/PurT family. As to quaternary structure, homodimer.

The catalysed reaction is N(1)-(5-phospho-beta-D-ribosyl)glycinamide + formate + ATP = N(2)-formyl-N(1)-(5-phospho-beta-D-ribosyl)glycinamide + ADP + phosphate + H(+). It participates in purine metabolism; IMP biosynthesis via de novo pathway; N(2)-formyl-N(1)-(5-phospho-D-ribosyl)glycinamide from N(1)-(5-phospho-D-ribosyl)glycinamide (formate route): step 1/1. Functionally, involved in the de novo purine biosynthesis. Catalyzes the transfer of formate to 5-phospho-ribosyl-glycinamide (GAR), producing 5-phospho-ribosyl-N-formylglycinamide (FGAR). Formate is provided by PurU via hydrolysis of 10-formyl-tetrahydrofolate. The polypeptide is Formate-dependent phosphoribosylglycinamide formyltransferase (Nitratidesulfovibrio vulgaris (strain ATCC 29579 / DSM 644 / CCUG 34227 / NCIMB 8303 / VKM B-1760 / Hildenborough) (Desulfovibrio vulgaris)).